Here is a 379-residue protein sequence, read N- to C-terminus: uncharacterized protein (379 aa).

Residues 7–27 traverse the membrane as a helical segment; it reads VYIFAGIFLFIALIILIKIFF.

The protein resides in the membrane. This is an uncharacterized protein from Caenorhabditis elegans.